Consider the following 341-residue polypeptide: N-acetyl-gamma-glutamyl-phosphate reductase (341 aa).

Residue cysteine 148 is part of the active site.

The protein belongs to the NAGSA dehydrogenase family. Type 1 subfamily.

The protein resides in the cytoplasm. The catalysed reaction is N-acetyl-L-glutamate 5-semialdehyde + phosphate + NADP(+) = N-acetyl-L-glutamyl 5-phosphate + NADPH + H(+). It participates in amino-acid biosynthesis; L-arginine biosynthesis; N(2)-acetyl-L-ornithine from L-glutamate: step 3/4. Functionally, catalyzes the NADPH-dependent reduction of N-acetyl-5-glutamyl phosphate to yield N-acetyl-L-glutamate 5-semialdehyde. The protein is N-acetyl-gamma-glutamyl-phosphate reductase of Pseudothermotoga lettingae (strain ATCC BAA-301 / DSM 14385 / NBRC 107922 / TMO) (Thermotoga lettingae).